A 968-amino-acid polypeptide reads, in one-letter code: Serine/threonine-protein kinase 10 (968 aa).

Ser13 and Ser20 each carry phosphoserine. In terms of domain architecture, Protein kinase spans 36–294 (WEIVGELGDG…AAQLLEHPFV (259 aa)). ATP is bound by residues 42–50 (LGDGAFGKV) and Lys65. The Proton acceptor role is filled by Asp157. Positions 175–224 (DFGVSAKNLKTLQKRDSFIGTPYWMAPEVVMCETMKDTPYDYKADIWSLG) are activation segment. Ser191 carries the post-translational modification Phosphoserine. Polar residues-rich tracts occupy residues 337–351 (LENH…SPPS) and 361–393 (SPST…TTSP). 2 disordered regions span residues 337–411 (LENH…VPLR) and 425–490 (AQEK…CSSL). Phosphoserine occurs at positions 438, 450, 454, 485, 514, and 549. A compositionally biased stretch (polar residues) spans 441–457 (ANRSQKASQSRPNSSAL). A coiled-coil region spans residues 573–947 (QKEEHRNQTQ…FFKLSEEAEC (375 aa)). Disordered stretches follow at residues 668 to 690 (VEKL…HTQK), 827 to 865 (INGG…HENQ), 910 to 929 (LKEW…EDLN), and 944 to 968 (EAEC…ADAS). Basic and acidic residues predominate over residues 835-865 (EQREKIKQFSQQEEKRQKSERLQQQQKHENQ). Residue Thr952 is modified to Phosphothreonine.

This sequence belongs to the protein kinase superfamily. STE Ser/Thr protein kinase family. STE20 subfamily. Homodimer; homodimerization is required for activation segment autophosphorylation. Autophosphorylates following homodimerization, leading to activation of the protein. Highly expressed in rapidly proliferating tissues (spleen, placenta, and peripheral blood leukocytes). Also expressed in brain, heart, skeletal muscle, colon, thymus, kidney, liver, small intestine and lung.

The protein localises to the cell membrane. The enzyme catalyses L-seryl-[protein] + ATP = O-phospho-L-seryl-[protein] + ADP + H(+). It catalyses the reaction L-threonyl-[protein] + ATP = O-phospho-L-threonyl-[protein] + ADP + H(+). With respect to regulation, inhibited by the pyrrole-indolinone inhibitor SU11274 (K00593): intercalates between the ATP-binding Lys-65 and alpha-C glutamate (Glu-81), resulting in a partial disordering of the lysine side chain. Also specifically inhibited by erlotinib. Slightly inhibited by gefitinib. In terms of biological role, serine/threonine-protein kinase involved in regulation of lymphocyte migration. Phosphorylates MSN, and possibly PLK1. Involved in regulation of lymphocyte migration by mediating phosphorylation of ERM proteins such as MSN. Acts as a negative regulator of MAP3K1/MEKK1. May also act as a cell cycle regulator by acting as a polo kinase kinase: mediates phosphorylation of PLK1 in vitro; however such data require additional evidences in vivo. In Homo sapiens (Human), this protein is Serine/threonine-protein kinase 10 (STK10).